Here is a 118-residue protein sequence, read N- to C-terminus: Large ribosomal subunit protein bL19 (118 aa).

The protein belongs to the bacterial ribosomal protein bL19 family.

Functionally, this protein is located at the 30S-50S ribosomal subunit interface and may play a role in the structure and function of the aminoacyl-tRNA binding site. In Parafrankia sp. (strain EAN1pec), this protein is Large ribosomal subunit protein bL19.